A 1392-amino-acid chain; its full sequence is DNA-directed RNA polymerase subunit beta (1392 aa).

It belongs to the RNA polymerase beta chain family. In terms of assembly, the RNAP catalytic core consists of 2 alpha, 1 beta, 1 beta' and 1 omega subunit. When a sigma factor is associated with the core the holoenzyme is formed, which can initiate transcription.

It carries out the reaction RNA(n) + a ribonucleoside 5'-triphosphate = RNA(n+1) + diphosphate. In terms of biological role, DNA-dependent RNA polymerase catalyzes the transcription of DNA into RNA using the four ribonucleoside triphosphates as substrates. The protein is DNA-directed RNA polymerase subunit beta of Neisseria meningitidis serogroup A / serotype 4A (strain DSM 15465 / Z2491).